A 612-amino-acid polypeptide reads, in one-letter code: BTB/POZ domain-containing protein 9 (612 aa).

The BTB domain occupies 36 to 104 (GDVTFVVEKK…IYTGRATLTD (69 aa)). One can recognise a BACK domain in the interval 142-240 (VCMTFDVASL…SLTELLNVVR (99 aa)). The tract at residues 559 to 612 (QQSTQKEDSSEEPGTGDLSTPSQQLDPHAPRAPSASSLPPSPGPNLHSPNQQNQ) is disordered. Residues 589–612 (RAPSASSLPPSPGPNLHSPNQQNQ) are compositionally biased toward low complexity.

In terms of tissue distribution, detected throughout the gray matter of the spinal cord including the motor neurons (at protein level). In the brain, detected in the neurons of the hippocampus and in the Purkinje cells of the cerebellum (at protein level). Also detected in the terospenial cortex, bed nucleus of the stria terminalis (BST) and the ventrolateral thalamus (VL) (at protein level).

The sequence is that of BTB/POZ domain-containing protein 9 (Btbd9) from Rattus norvegicus (Rat).